The following is a 361-amino-acid chain: Glyceraldehyde-3-phosphate dehydrogenase, glycosomal (361 aa).

NAD(+) is bound by residues 13-14, aspartate 39, and arginine 93; that span reads RI. D-glyceraldehyde 3-phosphate-binding positions include 166–168, threonine 198, 227–228, and arginine 250; these read SCT and TG. Residue cysteine 167 is the Nucleophile of the active site. Asparagine 336 contributes to the NAD(+) binding site. The Microbody targeting signal signature appears at 359 to 361; it reads SKL.

Belongs to the glyceraldehyde-3-phosphate dehydrogenase family. Homotetramer.

It localises to the glycosome. It catalyses the reaction D-glyceraldehyde 3-phosphate + phosphate + NAD(+) = (2R)-3-phospho-glyceroyl phosphate + NADH + H(+). It participates in carbohydrate degradation; glycolysis; pyruvate from D-glyceraldehyde 3-phosphate: step 1/5. The chain is Glyceraldehyde-3-phosphate dehydrogenase, glycosomal (GAPDG) from Crithidia fasciculata.